The following is a 2567-amino-acid chain: Unconventional myosin-XVIIIb (2567 aa).

The disordered stretch occupies residues Leu41–Asp508. Over residues Gly44–Gln54 the composition is skewed to basic and acidic residues. Over residues Ser71–Ile104 the composition is skewed to low complexity. Composition is skewed to basic and acidic residues over residues Leu105–Asp116 and Leu160–Pro176. A compositionally biased stretch (polar residues) spans Ser196–Thr206. 3 stretches are compositionally biased toward basic and acidic residues: residues Thr251–Gly265, Arg278–Ala287, and Ser326–Gly349. Over residues Glu350–Gln362 the composition is skewed to polar residues. Basic and acidic residues-rich tracts occupy residues Asp367–Glu377, Ser410–Lys420, Leu471–Gln485, and Glu492–Asp508. In terms of domain architecture, Myosin motor spans Asp571–Glu1333. Gly660–Thr667 serves as a coordination point for ATP. Residues Val1208 to Pro1232 form a disordered region. Residues Gly1213–Leu1240 form a GPA region. At Ser1216 the chain carries Phosphoserine. Residues Val1336–Ala1365 form the IQ domain. Coiled coils occupy residues Ser1396–Gly1783, Lys1825–Asp1961, and Glu2014–Ser2090. A tail region spans residues Asn1426–Ala2083. Phosphoserine is present on Ser1829. The segment covering Thr2139–Ile2153 has biased composition (polar residues). Disordered stretches follow at residues Thr2139 to Pro2194 and Ser2217 to Ala2249. Residues Ile2158 to Arg2167 are compositionally biased toward basic and acidic residues. Polar residues predominate over residues Thr2168–Lys2185. At Ser2193 the chain carries Phosphoserine. Residues Pro2227–Leu2238 show a composition bias toward polar residues. A phosphoserine mark is found at Ser2296 and Ser2309. The interval Ser2357–Leu2376 is disordered. Position 2377 is a phosphoserine (Ser2377). 2 disordered regions span residues Phe2444–Ser2471 and Lys2494–Lys2567. Positions Lys2494 to His2504 are enriched in basic and acidic residues. Positions Ser2506 to Ser2520 are enriched in low complexity. Residues Gly2537–Asp2556 show a composition bias toward basic and acidic residues.

This sequence belongs to the TRAFAC class myosin-kinesin ATPase superfamily. Myosin family. As to quaternary structure, homodimer. May interact with F actin through the GPA motif (Gly/Pro/Ala-rich). Selectively expressed in cardiac and skeletal muscles. Weakly expressed in testis, pancreas, placenta, prostate, lung and thymus.

Its subcellular location is the cytoplasm. It is found in the nucleus. It localises to the myofibril. The protein resides in the sarcomere. May be involved in intracellular trafficking of the muscle cell when in the cytoplasm, whereas entering the nucleus, may be involved in the regulation of muscle specific genes. May play a role in the control of tumor development and progression; restored MYO18B expression in lung cancer cells suppresses anchorage-independent growth. The protein is Unconventional myosin-XVIIIb (MYO18B) of Homo sapiens (Human).